The sequence spans 241 residues: ATP synthase subunit a (241 aa).

Helical transmembrane passes span 30-50 (GQVF…VVVG), 91-111 (FIGT…LVPW), 128-148 (INTT…AGLS), 193-213 (LVVA…VMFL), and 214-234 (GLFT…YYIG).

It belongs to the ATPase A chain family. F-type ATPases have 2 components, CF(1) - the catalytic core - and CF(0) - the membrane proton channel. CF(1) has five subunits: alpha(3), beta(3), gamma(1), delta(1), epsilon(1). CF(0) has four main subunits: a, b, b' and c.

It is found in the cellular thylakoid membrane. In terms of biological role, key component of the proton channel; it plays a direct role in the translocation of protons across the membrane. This Prochlorococcus marinus (strain MIT 9303) protein is ATP synthase subunit a.